A 282-amino-acid chain; its full sequence is Tumor necrosis factor ligand superfamily member 6 (282 aa).

The Cytoplasmic portion of the chain corresponds to 1-82 (MQQPFNYPYP…KKKRDHNAGL (82 aa)). Residues 30–73 (FPCPASVPGRPGQRRPPPPPPPPPPPPTLLPSRPLPPLPPPSLK) are disordered. The segment covering 43–71 (RRPPPPPPPPPPPPTLLPSRPLPPLPPPS) has biased composition (pro residues). The chain crosses the membrane as a helical; Signal-anchor for type II membrane protein span at residues 83-103 (CLLVMFFMVLVALVGLGLGMF). Topologically, residues 104–282 (QLFHLQKELT…SKTFFGLYKL (179 aa)) are extracellular. Basic and acidic residues predominate over residues 119–132 (ASQRHTESSLEKQI). The disordered stretch occupies residues 119 to 140 (ASQRHTESSLEKQIGHPNLPSE). A THD domain is found at 146–282 (KVAHLTGKPN…SKTFFGLYKL (137 aa)). N-linked (GlcNAc...) asparagine glycosylation occurs at N185. C203 and C234 are oxidised to a cystine. Residues N251 and N261 are each glycosylated (N-linked (GlcNAc...) asparagine).

Belongs to the tumor necrosis factor family. In terms of assembly, homotrimer. Interacts with ARHGAP9, BAIAP2L1, BTK, CACNB3, CACNB4, CRK, DLG2, DNMBP, DOCK4, EPS8L3, FGR, FYB1, FYN, HCK, ITK, ITSN2, KALRN, LYN, MACC1, MIA, MPP4, MYO15A, NCF1, NCK1, NCK2, NCKIPSD, OSTF1, PIK3R1, PSTPIP1, RIMBP3C, SAMSN1, SH3GL3, SH3PXD2B, SH3PXD2A, SH3RF2, SKAP2, SNX33, SNX9, SORBS3, SPTA1, SRC, SRGAP1, SRGAP2, SRGAP3, TEC, TJP3 and YES1. In terms of processing, the soluble form derives from the membrane form by proteolytic processing. The membrane-bound form undergoes two successive intramembrane proteolytic cleavages. The first one is processed by ADAM10 producing an N-terminal fragment, which lacks the receptor-binding extracellular domain. This ADAM10-processed FasL (FasL APL) remnant form is still membrane anchored and further processed by SPPL2A that liberates the FasL intracellular domain (FasL ICD). FasL shedding by ADAM10 is a prerequisite for subsequent intramembrane cleavage by SPPL2A in T-cells. Phosphorylated by FGR on tyrosine residues; this is required for ubiquitination and subsequent internalization. Post-translationally, N-glycosylated. Glycosylation enhances apoptotic activity. In terms of processing, monoubiquitinated.

The protein localises to the cell membrane. It localises to the cytoplasmic vesicle lumen. Its subcellular location is the lysosome lumen. The protein resides in the secreted. It is found in the nucleus. Functionally, cytokine that binds to TNFRSF6/FAS, a receptor that transduces the apoptotic signal into cells. Involved in cytotoxic T-cell-mediated apoptosis, natural killer cell-mediated apoptosis and in T-cell development. Initiates fratricidal/suicidal activation-induced cell death (AICD) in antigen-activated T-cells contributing to the termination of immune responses. TNFRSF6/FAS-mediated apoptosis also has a role in the induction of peripheral tolerance. Binds to TNFRSF6B/DcR3, a decoy receptor that blocks apoptosis. Its function is as follows. Induces FAS-mediated activation of NF-kappa-B, initiating non-apoptotic signaling pathways. Can induce apoptosis but does not appear to be essential for this process. Cytoplasmic form induces gene transcription inhibition. The polypeptide is Tumor necrosis factor ligand superfamily member 6 (FASLG) (Sus scrofa (Pig)).